The sequence spans 283 residues: Pantothenate synthetase (283 aa).

30 to 37 (MGYFHEGH) contributes to the ATP binding site. Residue His37 is the Proton donor of the active site. A (R)-pantoate-binding site is contributed by Gln61. Gln61 serves as a coordination point for beta-alanine. 147–150 (GEKD) is a binding site for ATP. Gln153 lines the (R)-pantoate pocket. ATP contacts are provided by residues Val176 and 184-187 (MSSR).

This sequence belongs to the pantothenate synthetase family. Homodimer.

The protein resides in the cytoplasm. The enzyme catalyses (R)-pantoate + beta-alanine + ATP = (R)-pantothenate + AMP + diphosphate + H(+). Its pathway is cofactor biosynthesis; (R)-pantothenate biosynthesis; (R)-pantothenate from (R)-pantoate and beta-alanine: step 1/1. In terms of biological role, catalyzes the condensation of pantoate with beta-alanine in an ATP-dependent reaction via a pantoyl-adenylate intermediate. The protein is Pantothenate synthetase of Syntrophobacter fumaroxidans (strain DSM 10017 / MPOB).